The primary structure comprises 214 residues: Histidine biosynthesis bifunctional protein HisIE (214 aa).

The tract at residues 1–125 (MPATALSLPL…ESIEPPPADT (125 aa)) is phosphoribosyl-AMP cyclohydrolase. Residues 126 to 214 (LSQVYNIVCQ…VYEQLQLRRR (89 aa)) form a phosphoribosyl-ATP pyrophosphohydrolase region.

In the N-terminal section; belongs to the PRA-CH family. It in the C-terminal section; belongs to the PRA-PH family.

It localises to the cytoplasm. It carries out the reaction 1-(5-phospho-beta-D-ribosyl)-ATP + H2O = 1-(5-phospho-beta-D-ribosyl)-5'-AMP + diphosphate + H(+). The enzyme catalyses 1-(5-phospho-beta-D-ribosyl)-5'-AMP + H2O = 1-(5-phospho-beta-D-ribosyl)-5-[(5-phospho-beta-D-ribosylamino)methylideneamino]imidazole-4-carboxamide. It participates in amino-acid biosynthesis; L-histidine biosynthesis; L-histidine from 5-phospho-alpha-D-ribose 1-diphosphate: step 2/9. Its pathway is amino-acid biosynthesis; L-histidine biosynthesis; L-histidine from 5-phospho-alpha-D-ribose 1-diphosphate: step 3/9. This is Histidine biosynthesis bifunctional protein HisIE from Thermosynechococcus vestitus (strain NIES-2133 / IAM M-273 / BP-1).